The primary structure comprises 1262 residues: Cytoplasmic FMR1-interacting protein homolog (1262 aa).

Positions 519-550 are disordered; sequence LNRMTDVKGKKKSSAPKGDSANSSSSDIRIPR.

It belongs to the CYFIP family. As to quaternary structure, interacts with gex-3.

It is found in the cytoplasm. Functionally, required for initial steps of body morphogenesis. May play a role in egg laying and yolk protein clatherin-mediated endocytosis by oocytes during oogenesis. Plays a role in the formation of muscle connections, also called muscle arm extensions, between the body wall and the motor axons in the dorsal and ventral cord. This is Cytoplasmic FMR1-interacting protein homolog from Caenorhabditis elegans.